Reading from the N-terminus, the 555-residue chain is F-box only protein 33 (555 aa).

An F-box domain is found at 65–111; it reads AAGAASLPSELIVHIFSFLPAPDRLRASASCSHWRECLFYPALWPQL.

In terms of assembly, part of the SCF (SKP1-CUL1-F-box) E3 ubiquitin-protein ligase complex SCF(FBXO33) formed of CUL1, SKP1, RBX1 and FBXO33. Interacts via its N-terminus with YBX1 CSD domain. Directly interacts with SKP1 and CUL1.

It functions in the pathway protein modification; protein ubiquitination. Substrate recognition component of a SCF (SKP1-CUL1-F-box protein) E3 ubiquitin-protein ligase complex which mediates the ubiquitination and subsequent proteasomal degradation of target proteins. Probably recognizes and binds to phosphorylated target proteins. Recognizes YBX1. This is F-box only protein 33 (FBXO33) from Homo sapiens (Human).